A 396-amino-acid chain; its full sequence is Diels-Alderase mpsD (396 aa).

This sequence belongs to the Diels-Alderase family.

Its pathway is secondary metabolite biosynthesis. Functionally, diels-Alderase; part of the gene cluster that mediates the biosynthesis of macrophasetins, 3-decalinoyltetramic acids (DTAs) which feature a tetramate (pyrrolidine-2,4-dione) unit connected to a decalin fragment and that have potent bioactivities. The PKS-NRPS mpsA together with its associated enoylreductase partner mpsG incorporate one unit of acetyl-CoA, seven units of malonyl-CoA, and one unit of L-alanine to assemble the linear tetramic acid intermediate corresponding to the backbone of macrophasetins. Without the Diels-Alderase mpsD, the mpsA/G product can undergo the non-enzymatic intramolecular Diels-Alder (IMDA) reaction to generate both macrophasetin A and macrophasetin B. Catalyzed by mpsD, the linear tetramic acid intermediate is thoroughly converted to macrophasetin A via the endo-IMDA reaction in a regioselective and stereoselective manner. Finally, the cytochrome P450 monooxygenase mpsF catalyzes the hydroxylation at C20 to yield the end product macrophasetin C. This is Diels-Alderase mpsD from Macrophomina phaseolina (strain MS6) (Charcoal rot fungus).